The primary structure comprises 523 residues: Nitrogenase molybdenum-iron protein beta chain (523 aa).

Residues Cys70, Cys95, Cys153, and Ser188 each contribute to the [8Fe-7S] cluster site.

This sequence belongs to the NifD/NifK/NifE/NifN family. As to quaternary structure, tetramer of two alpha and two beta chains. Forms complex with the iron protein (nitrogenase component 2). Requires [8Fe-7S] cluster as cofactor.

It catalyses the reaction N2 + 8 reduced [2Fe-2S]-[ferredoxin] + 16 ATP + 16 H2O = H2 + 8 oxidized [2Fe-2S]-[ferredoxin] + 2 NH4(+) + 16 ADP + 16 phosphate + 6 H(+). Nitrogenase holoenzyme is subject to 'conformational protection' by FeSII; under oxidizing conditions FeSII binds to the holoenzyme and reversibly protects it from oxidation. Its function is as follows. This molybdenum-iron protein is part of the nitrogenase complex that catalyzes the key enzymatic reactions in nitrogen fixation. This Azotobacter vinelandii protein is Nitrogenase molybdenum-iron protein beta chain (nifK).